The following is a 368-amino-acid chain: DNA replication and repair protein RecF (368 aa).

Residue 30–37 participates in ATP binding; that stretch reads GNNAQGKT.

The protein belongs to the RecF family.

The protein localises to the cytoplasm. The RecF protein is involved in DNA metabolism; it is required for DNA replication and normal SOS inducibility. RecF binds preferentially to single-stranded, linear DNA. It also seems to bind ATP. The sequence is that of DNA replication and repair protein RecF from Streptococcus pyogenes serotype M4 (strain MGAS10750).